The primary structure comprises 516 residues: GMP synthase [glutamine-hydrolyzing] (516 aa).

The Glutamine amidotransferase type-1 domain maps to 8–198; that stretch reads KILILDFGSQ…VVNICGCDTL (191 aa). The active-site Nucleophile is Cys-84. Catalysis depends on residues His-172 and Glu-174. A GMPS ATP-PPase domain is found at 199 to 391; that stretch reads WNIENIIEND…LGLPYNMLYR (193 aa). 226-232 contacts ATP; sequence SGGVDSS.

Homodimer.

It carries out the reaction XMP + L-glutamine + ATP + H2O = GMP + L-glutamate + AMP + diphosphate + 2 H(+). Its pathway is purine metabolism; GMP biosynthesis; GMP from XMP (L-Gln route): step 1/1. Functionally, catalyzes the synthesis of GMP from XMP. The chain is GMP synthase [glutamine-hydrolyzing] from Francisella tularensis subsp. novicida (strain U112).